Consider the following 438-residue polypeptide: RNA polymerase sigma factor SigA (438 aa).

A compositionally biased stretch (basic residues) spans 1–11 (MKKSKSKKKAA). A disordered region spans residues 1-69 (MKKSKSKKKA…PLDLEGPLEA (69 aa)). The span at 12–26 (KAQEVEVKEPVKEPE) shows a compositional bias: basic and acidic residues. Acidic residues-rich tracts occupy residues 27–45 (PLPE…EPDP) and 52–69 (PELE…PLEA). The tract at residues 93 to 128 (SDPVRQYLHEIGQVPLLTLEEEIDLARKVEEGMEAI) is sigma-70 factor domain-1. Residues 202–272 (LIEANLRLVV…NRAIADQART (71 aa)) are sigma-70 factor domain-2. The Interaction with polymerase core subunit RpoC signature appears at 226 to 229 (DLIQ). Residues 281–359 (ETINKLSRTA…DENLPSPVEA (79 aa)) form a sigma-70 factor domain-3 region. Residues 372–424 (ALSKLSEREAMVLKLRKGLIDGREHTLEEVGAYFGVTRERIRQIENKALRKLK) form a sigma-70 factor domain-4 region. Residues 398–417 (LEEVGAYFGVTRERIRQIEN) constitute a DNA-binding region (H-T-H motif).

It belongs to the sigma-70 factor family. RpoD/SigA subfamily. Interacts transiently with the RNA polymerase catalytic core formed by RpoA, RpoB, RpoC and RpoZ (2 alpha, 1 beta, 1 beta' and 1 omega subunit) to form the RNA polymerase holoenzyme that can initiate transcription.

It localises to the cytoplasm. In terms of biological role, sigma factors are initiation factors that promote the attachment of RNA polymerase to specific initiation sites and are then released. This sigma factor is the primary sigma factor during exponential growth. The sequence is that of RNA polymerase sigma factor SigA from Thermus aquaticus.